The following is a 259-amino-acid chain: Ribonuclease HII (259 aa).

Residues T70–E258 form the RNase H type-2 domain. A divalent metal cation-binding residues include D76, E77, and D168.

Belongs to the RNase HII family. Mn(2+) is required as a cofactor. Requires Mg(2+) as cofactor.

The protein localises to the cytoplasm. It catalyses the reaction Endonucleolytic cleavage to 5'-phosphomonoester.. In terms of biological role, endonuclease that specifically degrades the RNA of RNA-DNA hybrids. This is Ribonuclease HII from Streptococcus pneumoniae (strain P1031).